We begin with the raw amino-acid sequence, 151 residues long: Large ribosomal subunit protein bL9 (151 aa).

The protein belongs to the bacterial ribosomal protein bL9 family.

Binds to the 23S rRNA. The polypeptide is Large ribosomal subunit protein bL9 (Mycolicibacterium gilvum (strain PYR-GCK) (Mycobacterium gilvum (strain PYR-GCK))).